Reading from the N-terminus, the 550-residue chain is Phosphomannomutase (550 aa).

Serine 148 acts as the Phosphoserine intermediate in catalysis. Positions 148, 300, 302, and 304 each coordinate Mg(2+).

It belongs to the phosphohexose mutase family. Mg(2+) serves as cofactor.

It carries out the reaction alpha-D-mannose 1-phosphate = D-mannose 6-phosphate. The protein is Phosphomannomutase (manB) of Mycoplasma genitalium (strain ATCC 33530 / DSM 19775 / NCTC 10195 / G37) (Mycoplasmoides genitalium).